Consider the following 185-residue polypeptide: Ribosome-recycling factor (185 aa).

The segment at 163–185 (LTNEATKKIDAISKDKEKEITEG) is disordered. The segment covering 167–185 (ATKKIDAISKDKEKEITEG) has biased composition (basic and acidic residues).

It belongs to the RRF family.

The protein localises to the cytoplasm. Functionally, responsible for the release of ribosomes from messenger RNA at the termination of protein biosynthesis. May increase the efficiency of translation by recycling ribosomes from one round of translation to another. The sequence is that of Ribosome-recycling factor from Latilactobacillus sakei subsp. sakei (strain 23K) (Lactobacillus sakei subsp. sakei).